The sequence spans 420 residues: Odorant receptor 63a (420 aa).

The Cytoplasmic segment spans residues 1-43 (MYSPEEAAELKRRNYRSIREMIRLSYTVGFNLLDPSRCGQVLR). Residues 44 to 64 (IWTIVLSVSSLASLYGHWQML) form a helical membrane-spanning segment. Residues 65 to 76 (ARYIHDIPRIGE) are Extracellular-facing. A helical membrane pass occupies residues 77–97 (TAGTALQFLTSIAKMWYFLFA). Topologically, residues 98–150 (HRQIYELLRKARCHELLQKCELFERMSDLPVIKEIRQQVESTMNRYWASTRRQ) are cytoplasmic. A helical transmembrane segment spans residues 151–171 (ILIYLYSCICITTNYFINSFV). Residues 172–217 (INLYRYFTKPKGSYDIMLPLPSLYPAWEHKGLEFPYYHIQMYLETC) lie on the Extracellular side of the membrane. A helical membrane pass occupies residues 218-238 (SLYICGMCAVSFDGVFIVLCL). Over 239 to 296 (HSVGLMRSLNQMVEQATSELVPPDRRVEYLRCCIYQYQRVANFATEVNNCFRHITFTQ) the chain is Cytoplasmic. A helical membrane pass occupies residues 297-317 (FLLSLFNWGLALFQMSVGLGN). Residue Asn318 is glycosylated (N-linked (GlcNAc...) asparagine). Residues 318–320 (NSS) lie on the Extracellular side of the membrane. A helical transmembrane segment spans residues 321–341 (ITMIRMTMYLVAAGYQIVVYC). The Cytoplasmic segment spans residues 342–387 (YNGQRFATASEEIANAFYQVRWYGESREFRHLIRMMLMRTNRGFRL). Residues 388-408 (DVSWFMQMSLPTLMAMVRTSG) form a helical membrane-spanning segment. At 409–420 (QYFLLLQNVNQK) the chain is on the extracellular side.

This sequence belongs to the insect chemoreceptor superfamily. Heteromeric odorant receptor channel (TC 1.A.69) family. Or63a subfamily. In terms of assembly, interacts with Orco. Complexes exist early in the endomembrane system in olfactory sensory neurons (OSNs), coupling these complexes to the conserved ciliary trafficking pathway.

The protein localises to the cell membrane. Its function is as follows. Odorant receptor which mediates acceptance or avoidance behavior, depending on its substrates. The odorant receptor repertoire encodes a large collection of odor stimuli that vary widely in identity, intensity, and duration. May form a complex with Orco to form odorant-sensing units, providing sensitive and prolonged odorant signaling and calcium permeability. Involved in the behavioral responses to butyl acetate, isoamyl acetate, and hexanoic acid. The polypeptide is Odorant receptor 63a (Or63a) (Drosophila melanogaster (Fruit fly)).